A 371-amino-acid chain; its full sequence is uncharacterized protein (371 aa).

3 Solcar repeats span residues 3–98, 131–276, and 284–369; these read DDSL…CKVL, RYWG…FKSF, and KSNF…VRKW. 6 helical membrane passes run 9 to 29, 73 to 93, 137 to 157, 253 to 273, 290 to 310, and 341 to 362; these read AIAG…LDVV, GVGP…VVYE, IFSA…IWVV, LFPS…YEYF, VLAA…HEVL, and YYSG…TFLS.

It belongs to the mitochondrial carrier (TC 2.A.29) family.

It localises to the mitochondrion inner membrane. This is an uncharacterized protein from Schizosaccharomyces pombe (strain 972 / ATCC 24843) (Fission yeast).